A 365-amino-acid chain; its full sequence is MAQQTPLYEQHNLCGARMVDFHGWMMPLHYGSQIDEHHAVRNDAGMFDVSHMTIVDLRGARTREFLRYLLANDVAKLTQPGKALYTAMLNASGGVIDDLIVYFMTEDYFRLVVNSATREKDLAWINEHAEPYGVSVTVRDDLSLIAVQGPNAKAKAATLFTDAQRKATEGMKPFFGVQADDLFIATTGYTGEAGYEIAMPNEKAAGFWSQLVEAGVKPCGLGARDTLRLEAGMNLYGQEMDEGVSPLAANMGWTIAWQPEDRAFIGRDALEAQRENGTEQLVGLVMTEKGVLRGELPVRFTDDQGNAREGIITSGTFSPTLGYSIALARVPAGIGDTAIVQIRNREMPVKVTKPIFVRAGKPVTQ.

This sequence belongs to the GcvT family. In terms of assembly, the glycine cleavage system is composed of four proteins: P, T, L and H.

It catalyses the reaction N(6)-[(R)-S(8)-aminomethyldihydrolipoyl]-L-lysyl-[protein] + (6S)-5,6,7,8-tetrahydrofolate = N(6)-[(R)-dihydrolipoyl]-L-lysyl-[protein] + (6R)-5,10-methylene-5,6,7,8-tetrahydrofolate + NH4(+). In terms of biological role, the glycine cleavage system catalyzes the degradation of glycine. The sequence is that of Aminomethyltransferase from Cronobacter sakazakii (strain ATCC BAA-894) (Enterobacter sakazakii).